Reading from the N-terminus, the 50-residue chain is Protein PsbN (50 aa).

Residues 14-34 traverse the membrane as a helical segment; sequence VAVTILAVLLALTGFGLWTAF.

This sequence belongs to the PsbN family.

The protein localises to the cellular thylakoid membrane. Its function is as follows. May play a role in photosystem I and II biogenesis. This is Protein PsbN from Prochlorococcus marinus subsp. pastoris (strain CCMP1986 / NIES-2087 / MED4).